The following is a 454-amino-acid chain: Bifunctional protein GlmU (454 aa).

Residues 1-226 form a pyrophosphorylase region; sequence MALNVVILAA…AVEVEGANNR (226 aa). UDP-N-acetyl-alpha-D-glucosamine is bound by residues 8-11, K22, Q73, 78-79, 100-102, G137, E151, N166, and N224; these read LAAG, GT, and YGD. D102 contacts Mg(2+). Residue N224 coordinates Mg(2+). Residues 227 to 247 form a linker region; sequence VQLAQLERAYQARAAEKLMLE. Residues 248–454 form an N-acetyltransferase region; it reads GANLRDPARI…GWARPVKKAK (207 aa). Residues R330 and K348 each contribute to the UDP-N-acetyl-alpha-D-glucosamine site. H360 functions as the Proton acceptor in the catalytic mechanism. Residues Y363 and N374 each contribute to the UDP-N-acetyl-alpha-D-glucosamine site. Residues A377, 383–384, S402, A420, and R437 each bind acetyl-CoA; that span reads NY.

It in the N-terminal section; belongs to the N-acetylglucosamine-1-phosphate uridyltransferase family. This sequence in the C-terminal section; belongs to the transferase hexapeptide repeat family. Homotrimer. Mg(2+) serves as cofactor.

The protein localises to the cytoplasm. It catalyses the reaction alpha-D-glucosamine 1-phosphate + acetyl-CoA = N-acetyl-alpha-D-glucosamine 1-phosphate + CoA + H(+). The catalysed reaction is N-acetyl-alpha-D-glucosamine 1-phosphate + UTP + H(+) = UDP-N-acetyl-alpha-D-glucosamine + diphosphate. Its pathway is nucleotide-sugar biosynthesis; UDP-N-acetyl-alpha-D-glucosamine biosynthesis; N-acetyl-alpha-D-glucosamine 1-phosphate from alpha-D-glucosamine 6-phosphate (route II): step 2/2. It participates in nucleotide-sugar biosynthesis; UDP-N-acetyl-alpha-D-glucosamine biosynthesis; UDP-N-acetyl-alpha-D-glucosamine from N-acetyl-alpha-D-glucosamine 1-phosphate: step 1/1. It functions in the pathway bacterial outer membrane biogenesis; LPS lipid A biosynthesis. Functionally, catalyzes the last two sequential reactions in the de novo biosynthetic pathway for UDP-N-acetylglucosamine (UDP-GlcNAc). The C-terminal domain catalyzes the transfer of acetyl group from acetyl coenzyme A to glucosamine-1-phosphate (GlcN-1-P) to produce N-acetylglucosamine-1-phosphate (GlcNAc-1-P), which is converted into UDP-GlcNAc by the transfer of uridine 5-monophosphate (from uridine 5-triphosphate), a reaction catalyzed by the N-terminal domain. This chain is Bifunctional protein GlmU, found in Shewanella piezotolerans (strain WP3 / JCM 13877).